Consider the following 430-residue polypeptide: Phosphomethylpyrimidine synthase 2 (430 aa).

Substrate contacts are provided by residues N66, M95, Y124, H164, 186-188, 227-230, and E266; these read SRG and DGFR. Residue H270 participates in Zn(2+) binding. Y293 contributes to the substrate binding site. Position 334 (H334) interacts with Zn(2+). [4Fe-4S] cluster is bound by residues C411, C414, and C418.

The protein belongs to the ThiC family. In terms of assembly, homodimer. [4Fe-4S] cluster serves as cofactor.

It carries out the reaction 5-amino-1-(5-phospho-beta-D-ribosyl)imidazole + S-adenosyl-L-methionine = 4-amino-2-methyl-5-(phosphooxymethyl)pyrimidine + CO + 5'-deoxyadenosine + formate + L-methionine + 3 H(+). Its pathway is cofactor biosynthesis; thiamine diphosphate biosynthesis. Functionally, catalyzes the synthesis of the hydroxymethylpyrimidine phosphate (HMP-P) moiety of thiamine from aminoimidazole ribotide (AIR) in a radical S-adenosyl-L-methionine (SAM)-dependent reaction. This chain is Phosphomethylpyrimidine synthase 2, found in Syntrophotalea carbinolica (strain DSM 2380 / NBRC 103641 / GraBd1) (Pelobacter carbinolicus).